A 173-amino-acid chain; its full sequence is 6,7-dimethyl-8-ribityllumazine synthase (173 aa).

5-amino-6-(D-ribitylamino)uracil is bound by residues F24, 58–60 (ALE), and 82–84 (AVI). A (2S)-2-hydroxy-3-oxobutyl phosphate-binding site is contributed by 87–88 (ET). Catalysis depends on H90, which acts as the Proton donor. N115 serves as a coordination point for 5-amino-6-(D-ribitylamino)uracil. Position 129 (R129) interacts with (2S)-2-hydroxy-3-oxobutyl phosphate. The disordered stretch occupies residues 150-173 (TLDQLSDDEEDEEDEDDEDEEERA). A compositionally biased stretch (acidic residues) spans 154–173 (LSDDEEDEEDEDDEDEEERA).

It belongs to the DMRL synthase family.

The catalysed reaction is (2S)-2-hydroxy-3-oxobutyl phosphate + 5-amino-6-(D-ribitylamino)uracil = 6,7-dimethyl-8-(1-D-ribityl)lumazine + phosphate + 2 H2O + H(+). It functions in the pathway cofactor biosynthesis; riboflavin biosynthesis; riboflavin from 2-hydroxy-3-oxobutyl phosphate and 5-amino-6-(D-ribitylamino)uracil: step 1/2. Functionally, catalyzes the formation of 6,7-dimethyl-8-ribityllumazine by condensation of 5-amino-6-(D-ribitylamino)uracil with 3,4-dihydroxy-2-butanone 4-phosphate. This is the penultimate step in the biosynthesis of riboflavin. The protein is 6,7-dimethyl-8-ribityllumazine synthase of Burkholderia mallei (strain NCTC 10247).